A 208-amino-acid chain; its full sequence is FMN-dependent NADH:quinone oxidoreductase 1 (208 aa).

17–19 (SVS) contacts FMN.

It belongs to the azoreductase type 1 family. In terms of assembly, homodimer. It depends on FMN as a cofactor.

It carries out the reaction 2 a quinone + NADH + H(+) = 2 a 1,4-benzosemiquinone + NAD(+). It catalyses the reaction N,N-dimethyl-1,4-phenylenediamine + anthranilate + 2 NAD(+) = 2-(4-dimethylaminophenyl)diazenylbenzoate + 2 NADH + 2 H(+). Quinone reductase that provides resistance to thiol-specific stress caused by electrophilic quinones. Functionally, also exhibits azoreductase activity. Catalyzes the reductive cleavage of the azo bond in aromatic azo compounds to the corresponding amines. This chain is FMN-dependent NADH:quinone oxidoreductase 1, found in Listeria innocua serovar 6a (strain ATCC BAA-680 / CLIP 11262).